A 695-amino-acid chain; its full sequence is Methionine synthase reductase (695 aa).

Residues 4–147 (FLLLYATQRG…VVEPWINGLW (144 aa)) form the Flavodoxin-like domain. Residues 10–14 (TQRGQ) and 93–124 (LLGLGDSEYTYFCNGGKVIDKRLQELGAQRFY) contribute to the FMN site. Residues 166–245 (TLTMASHASR…ASLNIPSLPP (80 aa)) are hinge. Ser171 and Ser187 each carry phosphoserine. Positions 269 to 531 (DPVFHVPVSK…PRTTNSFHLP (263 aa)) constitute an FAD-binding FR-type domain. Lys289 serves as a coordination point for NADP(+). FAD is bound by residues 449–452 (RPYS) and 485–488 (GVCT). Residues 608–609 (SR), 622–624 (YVQ), and Asp657 each bind NADP(+). An FAD-binding site is contributed by Trp695.

In terms of assembly, forms a multiprotein complex with MMACHC, MMADHC and MTR. FAD serves as cofactor. FMN is required as a cofactor.

It localises to the cytoplasm. It carries out the reaction 2 methylcob(III)alamin-[methionine synthase] + 2 S-adenosyl-L-homocysteine + NADP(+) + H(+) = 2 cob(II)alamin-[methionine synthase] + 2 S-adenosyl-L-methionine + NADPH. The catalysed reaction is 2 cob(II)alamin + A + 2 H2O + 2 H(+) = 2 aquacob(III)alamin + AH2. Functionally, key enzyme in methionine and folate homeostasis responsible for the reactivation of methionine synthase (MTR/MS) activity by catalyzing the reductive methylation of MTR-bound cob(II)alamin. Cobalamin (vitamin B12) forms a complex with MTR to serve as an intermediary in methyl transfer reactions that cycles between MTR-bound methylcob(III)alamin and MTR bound-cob(I)alamin forms, and occasional oxidative escape of the cob(I)alamin intermediate during the catalytic cycle leads to the inactive cob(II)alamin species. The processing of cobalamin in the cytosol occurs in a multiprotein complex composed of at least MMACHC, MMADHC, MTRR and MTR which may contribute to shuttle safely and efficiently cobalamin towards MTR in order to produce methionine. Also necessary for the utilization of methyl groups from the folate cycle, thereby affecting transgenerational epigenetic inheritance. Also acts as a molecular chaperone for methionine synthase by stabilizing apoMTR and incorporating methylcob(III)alamin into apoMTR to form the holoenzyme. Also serves as an aquacob(III)alamin reductase by reducing aquacob(III)alamin to cob(II)alamin; this reduction leads to stimulation of the conversion of apoMTR and aquacob(III)alamin to MTR holoenzyme. This Bos taurus (Bovine) protein is Methionine synthase reductase (MTRR).